The sequence spans 966 residues: Regulator of telomere elongation helicase 1 homolog (966 aa).

Residues 7 to 284 (AGIPVHFPFE…QDMAGDEPKD (278 aa)) form the Helicase ATP-binding domain. 42-49 (SPTGTGKT) contacts ATP. C146, C164, C173, and C209 together coordinate [4Fe-4S] cluster. Positions 233–236 (DEAH) match the DEAH box motif. Positions 844-864 (VKIHKRERSSPTAPESTSQVS) are disordered. Residues 853–863 (SPTAPESTSQV) show a composition bias toward polar residues. A Phosphothreonine modification is found at T855.

This sequence belongs to the helicase family. RAD3/XPD subfamily.

The protein localises to the nucleus. The enzyme catalyses ATP + H2O = ADP + phosphate + H(+). Functionally, a probable ATP-dependent DNA helicase implicated in DNA repair and the maintenance of genomic stability. Acts as an anti-recombinase to counteract toxic recombination and limit crossover during meiosis. Regulates meiotic recombination and crossover homeostasis by physically dissociating strand invasion events and thereby promotes noncrossover repair by meiotic synthesis dependent strand annealing (SDSA) as well as disassembly of D loop recombination intermediates. This Drosophila sechellia (Fruit fly) protein is Regulator of telomere elongation helicase 1 homolog.